A 347-amino-acid chain; its full sequence is NADH-ubiquinone oxidoreductase chain 2 (347 aa).

The next 9 helical transmembrane spans lie at 3–23 (PLAL…TMMS), 59–79 (YFMT…INLM), 93–115 (VASN…HFWV), 150–170 (NTNL…WGGL), 178–198 (ILAY…PFNP), 200–220 (LTLL…MILA), 240–260 (MTIM…LSGF), 274–294 (NSII…YFYT), and 326–346 (LPTL…ISML).

Belongs to the complex I subunit 2 family. In terms of assembly, core subunit of respiratory chain NADH dehydrogenase (Complex I) which is composed of 45 different subunits. Interacts with TMEM242.

It localises to the mitochondrion inner membrane. The catalysed reaction is a ubiquinone + NADH + 5 H(+)(in) = a ubiquinol + NAD(+) + 4 H(+)(out). Its function is as follows. Core subunit of the mitochondrial membrane respiratory chain NADH dehydrogenase (Complex I) which catalyzes electron transfer from NADH through the respiratory chain, using ubiquinone as an electron acceptor. Essential for the catalytic activity and assembly of complex I. This chain is NADH-ubiquinone oxidoreductase chain 2, found in Elephas maximus (Indian elephant).